Reading from the N-terminus, the 318-residue chain is Ribosomal RNA small subunit methyltransferase H (318 aa).

S-adenosyl-L-methionine-binding positions include glycine 34 to histidine 36, aspartate 57, leucine 91, aspartate 110, and glutamine 117.

It belongs to the methyltransferase superfamily. RsmH family.

It is found in the cytoplasm. It carries out the reaction cytidine(1402) in 16S rRNA + S-adenosyl-L-methionine = N(4)-methylcytidine(1402) in 16S rRNA + S-adenosyl-L-homocysteine + H(+). In terms of biological role, specifically methylates the N4 position of cytidine in position 1402 (C1402) of 16S rRNA. The polypeptide is Ribosomal RNA small subunit methyltransferase H (Chlorobaculum parvum (strain DSM 263 / NCIMB 8327) (Chlorobium vibrioforme subsp. thiosulfatophilum)).